A 1547-amino-acid chain; its full sequence is Tubby-related protein 4 (1547 aa).

WD repeat units lie at residues 80–119 (GHNSEVVLVRWNEPYQKLATCDADGGIFVWIQYEGRWSVE), 123–162 (DRGAQVSDFTWSHDGTQALISYRDGFVLVGSVSGQRHWSS), and 165–204 (NLESQITCGIWTPDDQQVLFGTADGQVIVMDCHGRMLAHV). Positions 364-414 (ALYVVRVEHRVSSLQLLCQQAIASTLREDKDVNKLTLPPRLCSYLSTAFIP) constitute an SOCS box domain. The interval 530–580 (SPKISRSSKSPKLPRISIEARKSPKLPRAAQEISRSPRLPMRKPSMGSPSL) is disordered. Positions 533-546 (ISRSSKSPKLPRIS) are enriched in low complexity. The residue at position 577 (Ser577) is a Phosphoserine. An asymmetric dimethylarginine mark is found at Arg949 and Arg954. Phosphoserine occurs at positions 1347 and 1378. The tract at residues 1374-1414 (SLISSPRLGREKKKVKSQKDQLKSKKLNKTNEFQDSSESEP) is disordered. The segment at 1436–1547 (SKRSLRTASE…ALANVTQRLK (112 aa)) is TUB.

It belongs to the TUB family.

It localises to the cytoplasm. It functions in the pathway protein modification; protein ubiquitination. May be a substrate-recognition component of a SCF-like ECS (Elongin-Cullin-SOCS-box protein) E3 ubiquitin ligase complex which mediates the ubiquitination and subsequent proteasomal degradation of target proteins. The chain is Tubby-related protein 4 (Tulp4) from Mus musculus (Mouse).